The sequence spans 658 residues: ATP-dependent RNA helicase DDX3Y (658 aa).

Residues 1–143 (MSQVAAESTA…DWSKPLPPSE (143 aa)) form a disordered region. Ser2 is subject to N-acetylserine. Basic and acidic residues predominate over residues 45-69 (RNRETSKGVCDKDSSGWSCSKDKDA). Residue Lys56 is modified to N6-acetyllysine. Phosphoserine occurs at positions 86 and 90. The segment covering 94–129 (GRFDDHGRNDYDGIGGRDRTGFGKFERSGHSRWSDR) has biased composition (basic and acidic residues). Position 101 is an omega-N-methylarginine (Arg101). Tyr104 is modified (phosphotyrosine). Omega-N-methylarginine is present on Arg110. Lys117 is modified (N6-acetyllysine). Phosphoserine occurs at positions 130 and 182. The Q motif signature appears at 179–207 (ENFSDIEMGEIIMGNIELTRYTRPTPVQK). 199–206 (YTRPTPVQ) serves as a coordination point for ATP. Residues 210–402 (IPIIKEKRDL…RDFLDEYIFL (193 aa)) form the Helicase ATP-binding domain. A Glycyl lysine isopeptide (Lys-Gly) (interchain with G-Cter in SUMO2) cross-link involves residue Lys214. Residue 223 to 230 (AQTGSGKT) participates in ATP binding. A DEAD box motif is present at residues 346–349 (DEAD). The 162-residue stretch at 413-574 (NITQKVVWVE…EVPSWLESMA (162 aa)) folds into the Helicase C-terminal domain. At Ser455 the chain carries Phosphoserine. The residue at position 590 (Arg590) is an Omega-N-methylarginine. Residues Ser592 and Ser603 each carry the phosphoserine modification. Residues 597 to 627 (ARDYRQSSGSANAGFNSNRANSSRSSGSSHN) form a disordered region. The span at 603-627 (SSGSANAGFNSNRANSSRSSGSSHN) shows a compositional bias: low complexity. Residues Arg615 and Arg628 each carry the omega-N-methylarginine modification.

Belongs to the DEAD box helicase family. DDX3/DED1 subfamily. Found in heart, brain, liver, skeletal muscle, kidney and testis. Low expression detected in lung. In testis, expressed in all types of spermatogenic cells including spermatogonia, spermatocytes, spermatids and somatic Sertoli cells within the seminiferous tubules. Also expressed in Leydig cells and other interstitial cells.

It is found in the cytoplasm. The protein localises to the nucleus. The catalysed reaction is ATP + H2O = ADP + phosphate + H(+). In terms of biological role, probable ATP-dependent RNA helicase. During immune response, may enhance IFNB1 expression via IRF3/IRF7 pathway. This Mus musculus (Mouse) protein is ATP-dependent RNA helicase DDX3Y (Ddx3y).